The primary structure comprises 250 residues: Acidic endochitinase (250 aa).

A Pyrrolidone carboxylic acid modification is found at Q1. Residues 1–36 form the Chitin-binding type-1 domain; the sequence is QNCQCDTTIYCCSQHGYCGNSYDYCGPGCQAGPCWD. 7 disulfides stabilise this stretch: C3/C12, C5/C18, C11/C25, C29/C34, C66/C115, C128/C136, and C218/C250. Residue E110 is the Proton donor of the active site.

Belongs to the glycosyl hydrolase 19 family. Chitinase class I subfamily.

It catalyses the reaction Random endo-hydrolysis of N-acetyl-beta-D-glucosaminide (1-&gt;4)-beta-linkages in chitin and chitodextrins.. Its function is as follows. Defense against chitin-containing fungal pathogens. This Dioscorea japonica (Japanese yam) protein is Acidic endochitinase.